Reading from the N-terminus, the 446-residue chain is Adenylosuccinate synthetase (446 aa).

Residues 20–26 (GDEGKGK) and 48–50 (GHT) each bind GTP. The active-site Proton acceptor is the Asp21. Residues Asp21 and Gly48 each contribute to the Mg(2+) site. IMP-binding positions include 21 to 24 (DEGK), 46 to 49 (NAGH), Thr137, Arg151, Gln232, Thr247, and Arg319. His49 serves as the catalytic Proton donor. Residue 315–321 (SVTGRPR) coordinates substrate. Residues Arg321, 347–349 (KLD), and 429–431 (STG) contribute to the GTP site.

It belongs to the adenylosuccinate synthetase family. Homodimer. The cofactor is Mg(2+).

The protein resides in the cytoplasm. It carries out the reaction IMP + L-aspartate + GTP = N(6)-(1,2-dicarboxyethyl)-AMP + GDP + phosphate + 2 H(+). The protein operates within purine metabolism; AMP biosynthesis via de novo pathway; AMP from IMP: step 1/2. Plays an important role in the de novo pathway of purine nucleotide biosynthesis. Catalyzes the first committed step in the biosynthesis of AMP from IMP. The chain is Adenylosuccinate synthetase from Polynucleobacter necessarius subsp. necessarius (strain STIR1).